Consider the following 199-residue polypeptide: Recombination protein RecR (199 aa).

Residues 58-73 (CKKCFNLTSEEECDIC) form a C4-type zinc finger. The 95-residue stretch at 81 to 175 (NIICVVAETK…KVTRIAYGLP (95 aa)) folds into the Toprim domain.

This sequence belongs to the RecR family.

Functionally, may play a role in DNA repair. It seems to be involved in an RecBC-independent recombinational process of DNA repair. It may act with RecF and RecO. The sequence is that of Recombination protein RecR from Prochlorococcus marinus (strain MIT 9515).